We begin with the raw amino-acid sequence, 252 residues long: Chitooligosaccharide deacetylase (252 aa).

Mg(2+)-binding residues include His-61 and His-125.

It belongs to the YdjC deacetylase family. ChbG subfamily. As to quaternary structure, homodimer. Requires Mg(2+) as cofactor.

The protein localises to the cytoplasm. It catalyses the reaction N,N'-diacetylchitobiose + H2O = N-acetyl-beta-D-glucosaminyl-(1-&gt;4)-D-glucosamine + acetate. The enzyme catalyses diacetylchitobiose-6'-phosphate + H2O = N'-monoacetylchitobiose-6'-phosphate + acetate. It functions in the pathway glycan degradation; chitin degradation. Its function is as follows. Involved in the degradation of chitin. ChbG is essential for growth on the acetylated chitooligosaccharides chitobiose and chitotriose but is dispensable for growth on cellobiose and chitosan dimer, the deacetylated form of chitobiose. Deacetylation of chitobiose-6-P and chitotriose-6-P is necessary for both the activation of the chb promoter by the regulatory protein ChbR and the hydrolysis of phosphorylated beta-glucosides by the phospho-beta-glucosidase ChbF. Catalyzes the removal of only one acetyl group from chitobiose-6-P to yield monoacetylchitobiose-6-P, the inducer of ChbR and the substrate of ChbF. The protein is Chitooligosaccharide deacetylase of Citrobacter koseri (strain ATCC BAA-895 / CDC 4225-83 / SGSC4696).